The following is a 130-amino-acid chain: Sec-independent protein translocase protein TatB (130 aa).

A helical membrane pass occupies residues 1–21 (MFDIGFWELVLIFVVGLVVLG). Positions 85–130 (LKQAAQSVNRPYADVSAKNEATSSSSSDATHQTEATKTSAANTKSE) are disordered. Residues 112 to 130 (DATHQTEATKTSAANTKSE) are compositionally biased toward polar residues.

It belongs to the TatB family. In terms of assembly, the Tat system comprises two distinct complexes: a TatABC complex, containing multiple copies of TatA, TatB and TatC subunits, and a separate TatA complex, containing only TatA subunits. Substrates initially bind to the TatABC complex, which probably triggers association of the separate TatA complex to form the active translocon.

It is found in the cell inner membrane. Functionally, part of the twin-arginine translocation (Tat) system that transports large folded proteins containing a characteristic twin-arginine motif in their signal peptide across membranes. Together with TatC, TatB is part of a receptor directly interacting with Tat signal peptides. TatB may form an oligomeric binding site that transiently accommodates folded Tat precursor proteins before their translocation. This chain is Sec-independent protein translocase protein TatB, found in Vibrio vulnificus (strain CMCP6).